The sequence spans 314 residues: MTTVLLTSTSGPLSDDAARSVRELVALETERLGVPPLSEQPLLNLRDPRARVVHIMDTQGGDVTGYAQLDVSREGGSLELTARCADRTQCVGALLNEAELIAQDHDVVVRPWVHGDDPDVTRVLAQRGYVPARTLLVLSRDLSLADTQALATPVVPEGFVCRRFDPISDADSLLAANSDAFSWHPEQGRLTHHDLSMRMKEPWFTPDHLHVVTPVSESARIVGFVWLKAEPHSRSIELYVLGVTEAAQGQGVGRFLTELATVTALNQGYPRLHLYVEADNTRALALYTQHGFAPMERHVNFTQPTGELGHEPPS.

Glu-39 contributes to the 1D-myo-inositol 2-(L-cysteinylamino)-2-deoxy-alpha-D-glucopyranoside binding site. Residue 80 to 82 (LTA) coordinates acetyl-CoA. The 155-residue stretch at 159–313 (FVCRRFDPIS…PTGELGHEPP (155 aa)) folds into the N-acetyltransferase domain. Residues Glu-186, Lys-228, and Glu-237 each contribute to the 1D-myo-inositol 2-(L-cysteinylamino)-2-deoxy-alpha-D-glucopyranoside site. Residues 241 to 243 (LGV) and 248 to 254 (QGQGVGR) each bind acetyl-CoA. Position 275 (Tyr-275) interacts with 1D-myo-inositol 2-(L-cysteinylamino)-2-deoxy-alpha-D-glucopyranoside.

Belongs to the acetyltransferase family. MshD subfamily. Monomer.

The enzyme catalyses 1D-myo-inositol 2-(L-cysteinylamino)-2-deoxy-alpha-D-glucopyranoside + acetyl-CoA = mycothiol + CoA + H(+). Its function is as follows. Catalyzes the transfer of acetyl from acetyl-CoA to desacetylmycothiol (Cys-GlcN-Ins) to form mycothiol. The chain is Mycothiol acetyltransferase from Jonesia denitrificans (strain ATCC 14870 / DSM 20603 / BCRC 15368 / CIP 55.134 / JCM 11481 / NBRC 15587 / NCTC 10816 / Prevot 55134) (Listeria denitrificans).